The chain runs to 657 residues: Methionine--tRNA ligase (657 aa).

The 'HIGH' region motif lies at 13 to 23; the sequence is YYPSGNLHIGH. The short motif at 308 to 312 is the 'KMSKS' region element; the sequence is KMSKS. Lys311 provides a ligand contact to ATP. The tRNA-binding domain maps to 557–657; sequence DFDKVEIKAA…SAIPNGAVIK (101 aa).

Belongs to the class-I aminoacyl-tRNA synthetase family. MetG type 2B subfamily. Homodimer.

It is found in the cytoplasm. The enzyme catalyses tRNA(Met) + L-methionine + ATP = L-methionyl-tRNA(Met) + AMP + diphosphate. Its function is as follows. Is required not only for elongation of protein synthesis but also for the initiation of all mRNA translation through initiator tRNA(fMet) aminoacylation. The chain is Methionine--tRNA ligase from Staphylococcus aureus (strain COL).